The following is a 245-amino-acid chain: Transcriptional activator protein ExpR (245 aa).

An HTH luxR-type domain is found at 173 to 238; sequence RSNDKDIFSQ…HAIRLGIELQ (66 aa). The H-T-H motif DNA-binding region spans 197–216; sequence YQEIALILDIKTGTVKFHIG.

It belongs to the autoinducer-regulated transcriptional regulatory protein family.

Its function is as follows. Functions as an OHLL responsive transcriptional regulator that acts in virulence (soft rot disease) through the activation of genes for plant tissue macerating enzymes. The polypeptide is Transcriptional activator protein ExpR (expR) (Pectobacterium parmentieri).